Reading from the N-terminus, the 503-residue chain is Glycerol kinase (503 aa).

Position 14 (Thr-14) interacts with ADP. Residues Thr-14, Thr-15, and Ser-16 each contribute to the ATP site. Thr-14 provides a ligand contact to sn-glycerol 3-phosphate. Arg-18 provides a ligand contact to ADP. The sn-glycerol 3-phosphate site is built by Arg-84, Glu-85, Tyr-136, and Asp-246. Positions 84, 85, 136, 246, and 247 each coordinate glycerol. ADP contacts are provided by Thr-268 and Gly-311. ATP is bound by residues Thr-268, Gly-311, Gln-315, and Gly-412. The ADP site is built by Gly-412 and Asn-416.

The protein belongs to the FGGY kinase family. In terms of assembly, homotetramer and homodimer (in equilibrium). Heterodimer with EIIA-Glc. Binds 1 zinc ion per glycerol kinase EIIA-Glc dimer. The zinc ion is important for dimerization.

It carries out the reaction glycerol + ATP = sn-glycerol 3-phosphate + ADP + H(+). The protein operates within polyol metabolism; glycerol degradation via glycerol kinase pathway; sn-glycerol 3-phosphate from glycerol: step 1/1. Its activity is regulated as follows. Activity of this regulatory enzyme is affected by several metabolites. Allosterically and non-competitively inhibited by fructose 1,6-bisphosphate (FBP) and unphosphorylated phosphocarrier protein EIIA-Glc (III-Glc), an integral component of the bacterial phosphotransferase (PTS) system. Its function is as follows. Key enzyme in the regulation of glycerol uptake and metabolism. Catalyzes the phosphorylation of glycerol to yield sn-glycerol 3-phosphate. This chain is Glycerol kinase, found in Klebsiella pneumoniae subsp. pneumoniae (strain ATCC 700721 / MGH 78578).